The chain runs to 88 residues: Apolipoprotein C-I (88 aa).

An N-terminal signal peptide occupies residues 1 to 26 (MRLLLSLPVLLVALSVVLERPAPAQA).

The protein belongs to the apolipoprotein C1 family.

It is found in the secreted. Its function is as follows. Inhibitor of lipoprotein binding to the low density lipoprotein (LDL) receptor, LDL receptor-related protein, and very low density lipoprotein (VLDL) receptor. Associates with high density lipoproteins (HDL) and the triacylglycerol-rich lipoproteins in the plasma and makes up about 10% of the protein of the VLDL and 2% of that of HDL. Appears to interfere directly with fatty acid uptake and is also the major plasma inhibitor of cholesteryl ester transfer protein (CETP). Binds free fatty acids and reduces their intracellular esterification. Modulates the interaction of APOE with beta-migrating VLDL and inhibits binding of beta-VLDL to the LDL receptor-related protein. The sequence is that of Apolipoprotein C-I (APOC1) from Tupaia glis (Common tree shrew).